We begin with the raw amino-acid sequence, 930 residues long: Translation initiation factor IF-2 (930 aa).

Over residues 50–67 (FKPAAAPKVEAKPAAPKV) the composition is skewed to low complexity. Disordered stretches follow at residues 50-217 (FKPA…SSEE) and 260-346 (EVVP…HELP). Composition is skewed to basic and acidic residues over residues 68–90 (SAEKKAEKSEPAKPAVAKEEAKP) and 110–125 (FKAEREARAKEQAERR). Residues 129–141 (KGNNRDQQQNGNR) are compositionally biased toward low complexity. 2 stretches are compositionally biased toward basic and acidic residues: residues 157-167 (RDNRRFNDQAK) and 262-295 (VPEKKEPAVDTRRKKQARPDKNRDDYDHEEDGPR). The span at 309–318 (NQKNSNWNNN) shows a compositional bias: low complexity. Residues 337–346 (VTERKFHELP) are compositionally biased toward basic and acidic residues. The region spanning 432–599 (ERPPVVTIMG…TVLLVAEIQE (168 aa)) is the tr-type G domain. The tract at residues 441–448 (GHVDHGKT) is G1. Residue 441-448 (GHVDHGKT) participates in GTP binding. The G2 stretch occupies residues 466-470 (GITQH). The tract at residues 487-490 (DTPG) is G3. Residues 487–491 (DTPGH) and 541–544 (NKID) contribute to the GTP site. Residues 541–544 (NKID) form a G4 region. The tract at residues 577 to 579 (SAK) is G5.

It belongs to the TRAFAC class translation factor GTPase superfamily. Classic translation factor GTPase family. IF-2 subfamily.

Its subcellular location is the cytoplasm. Functionally, one of the essential components for the initiation of protein synthesis. Protects formylmethionyl-tRNA from spontaneous hydrolysis and promotes its binding to the 30S ribosomal subunits. Also involved in the hydrolysis of GTP during the formation of the 70S ribosomal complex. The sequence is that of Translation initiation factor IF-2 from Streptococcus pneumoniae (strain Taiwan19F-14).